A 390-amino-acid polypeptide reads, in one-letter code: Lissencephaly-1 homolog (390 aa).

The LisH domain maps to Gln7–Glu39. The stretch at Thr54–Gly80 forms a coiled coil. WD repeat units lie at residues Gly104–Lys145, Gly146–Lys185, Gly189–Thr228, Gly231–Tyr270, Glu272–Thr313, Ala316–Ala355, and Ala358–Arg390.

It belongs to the WD repeat LIS1/nudF family.

The protein localises to the cytoplasm. It is found in the cytoskeleton. It localises to the microtubule organizing center. The protein resides in the centrosome. Functionally, positively regulates the activity of the minus-end directed microtubule motor protein dynein. May enhance dynein-mediated microtubule sliding by targeting dynein to the microtubule plus end. Required for several dynein- and microtubule-dependent processes. The chain is Lissencephaly-1 homolog from Caenorhabditis briggsae.